A 217-amino-acid polypeptide reads, in one-letter code: 3-demethoxyubiquinol 3-hydroxylase (217 aa).

E66, E96, H99, E148, E180, and H183 together coordinate Fe cation.

The protein belongs to the COQ7 family. It depends on Fe cation as a cofactor.

It localises to the cell membrane. It carries out the reaction a 5-methoxy-2-methyl-3-(all-trans-polyprenyl)benzene-1,4-diol + AH2 + O2 = a 3-demethylubiquinol + A + H2O. The protein operates within cofactor biosynthesis; ubiquinone biosynthesis. Its function is as follows. Catalyzes the hydroxylation of 2-nonaprenyl-3-methyl-6-methoxy-1,4-benzoquinol during ubiquinone biosynthesis. This Xanthomonas euvesicatoria pv. vesicatoria (strain 85-10) (Xanthomonas campestris pv. vesicatoria) protein is 3-demethoxyubiquinol 3-hydroxylase.